Consider the following 289-residue polypeptide: 4-hydroxy-tetrahydrodipicolinate synthase (289 aa).

Thr43 is a binding site for pyruvate. Catalysis depends on Tyr131, which acts as the Proton donor/acceptor. The Schiff-base intermediate with substrate role is filled by Lys160. Val200 provides a ligand contact to pyruvate.

The protein belongs to the DapA family. Homotetramer; dimer of dimers.

It localises to the cytoplasm. It catalyses the reaction L-aspartate 4-semialdehyde + pyruvate = (2S,4S)-4-hydroxy-2,3,4,5-tetrahydrodipicolinate + H2O + H(+). It functions in the pathway amino-acid biosynthesis; L-lysine biosynthesis via DAP pathway; (S)-tetrahydrodipicolinate from L-aspartate: step 3/4. Functionally, catalyzes the condensation of (S)-aspartate-beta-semialdehyde [(S)-ASA] and pyruvate to 4-hydroxy-tetrahydrodipicolinate (HTPA). The sequence is that of 4-hydroxy-tetrahydrodipicolinate synthase from Methanococcus maripaludis (strain DSM 14266 / JCM 13030 / NBRC 101832 / S2 / LL).